We begin with the raw amino-acid sequence, 128 residues long: Protein BEX1 (128 aa).

The tract at residues 1–55 (MESKDQGAKNLNMENDHQKKEEKEEKPQDTIKREPVVAPTFEAGKNCAPRGGRRR) is disordered. Over residues 14-35 (ENDHQKKEEKEEKPQDTIKREP) the composition is skewed to basic and acidic residues. Ser105 is subject to Phosphoserine; by PKB/AKT1. The interval 107 to 128 (SLRAVSTDPPHHDHHDEFCLMP) is disordered. Positions 115 to 128 (PPHHDHHDEFCLMP) are enriched in basic and acidic residues. Residues 117–121 (HHDHH) form a his cluster region. Position 125 (Cys125) interacts with Zn(2+).

This sequence belongs to the BEX family. In terms of assembly, interacts with neurotrophin receptor p75NTR/NGFR. Interacts with OMP. Post-translationally, phosphorylated. Phosphorylation of Ser-105 protects it from the proteasome. In terms of processing, ubiquitinated. Degraded by the proteasome. As to expression, expressed in the central nervous system. Expressed in Schwann cells from newborn sciatic nerve.

It localises to the nucleus. Its subcellular location is the cytoplasm. Its function is as follows. Signaling adapter molecule involved in p75NTR/NGFR signaling. Plays a role in cell cycle progression and neuronal differentiation. Inhibits neuronal differentiation in response to nerve growth factor (NGF). May act as a link between the cell cycle and neurotrophic factor signaling, possibly by functioning as an upstream modulator of receptor signaling, coordinating biological responses to external signals with internal cellular states. In absence of reductive stress, acts as a pseudosubstrate for the CRL2(FEM1B) complex: associates with FEM1B via zinc, thereby preventing association between FEM1B and its substrates. This is Protein BEX1 (Bex1) from Rattus norvegicus (Rat).